A 551-amino-acid polypeptide reads, in one-letter code: Scaffold protein OPG125 (551 aa).

This sequence belongs to the orthopoxvirus protein OPG125 family. In terms of assembly, homotrimer. Self-assembles to form a layer. Interacts with OPG158 (via N-terminus); this interaction is necessary for OPG125 association with membranes.

Its subcellular location is the membrane. Its function is as follows. Scaffold protein which forms a transitory spherical honeycomb lattice providing curvature and rigidity to the convex membrane of crescent and immature virions (IV). This association occurs concomitantly with viral membrane formation. Targeted by the drug rifampicin, which prevents the formation of this lattice, and hence virus morphogenesis. In the presence of rifampicin, irregularly shaped membranes that lack the honeycomb layer accumulate around areas of electron-dense viroplasm. This layer is lost from virions during maturation from IV to mature virion (MV), through the proteolysis of OPG158 N-terminus. The protein is Scaffold protein OPG125 (OPG125) of Homo sapiens (Human).